Here is a 425-residue protein sequence, read N- to C-terminus: 2-methylserine hydroxymethyltransferase (425 aa).

(6S)-5,6,7,8-tetrahydrofolate contacts are provided by residues leucine 126 and 130–132; that span reads GHL. Lysine 235 carries the post-translational modification N6-(pyridoxal phosphate)lysine. (6S)-5,6,7,8-tetrahydrofolate is bound at residue glutamate 251.

It belongs to the SHMT family. Homodimer. Pyridoxal 5'-phosphate is required as a cofactor.

The protein resides in the cytoplasm. It carries out the reaction (6R)-5,10-methylene-5,6,7,8-tetrahydrofolate + D-alanine + H2O = 2-methylserine + (6S)-5,6,7,8-tetrahydrofolate. It functions in the pathway one-carbon metabolism; tetrahydrofolate interconversion. Inhibited by hydroxylamine and sodium borohydride. Its function is as follows. Catalyzes the reversible interconversion of alpha-methyl-L-serine to D-alanine with tetrahydrofolate (THF) serving as the one-carbon carrier. Cannot use alpha-methyl-D-serine, L-serine, D-serine or L-alanine. This Paracoccus sp protein is 2-methylserine hydroxymethyltransferase.